Consider the following 147-residue polypeptide: UPF0735 ACT domain-containing protein BH1214 (147 aa).

The 76-residue stretch at 70–145 (TLSINLEDRS…AVEKVELVGS (76 aa)) folds into the ACT domain.

The protein belongs to the UPF0735 family.

This is UPF0735 ACT domain-containing protein BH1214 from Halalkalibacterium halodurans (strain ATCC BAA-125 / DSM 18197 / FERM 7344 / JCM 9153 / C-125) (Bacillus halodurans).